A 2677-amino-acid polypeptide reads, in one-letter code: Probable helicase senataxin (2677 aa).

A Glycyl lysine isopeptide (Lys-Gly) (interchain with G-Cter in SUMO1) cross-link involves residue K339. A phosphoserine mark is found at S615, S642, and S878. Residue K894 forms a Glycyl lysine isopeptide (Lys-Gly) (interchain with G-Cter in SUMO2) linkage. Phosphoserine is present on residues S911, S947, S956, S1017, and S1019. Glycyl lysine isopeptide (Lys-Gly) (interchain with G-Cter in SUMO2) cross-links involve residues K1056 and K1063. Disordered stretches follow at residues K1158–S1219 and P1237–N1258. Over residues P1176–D1187 the composition is skewed to polar residues. Residues T1188–T1205 show a composition bias toward basic and acidic residues. The segment covering S1206 to S1219 has biased composition (polar residues). S1330 bears the Phosphoserine mark. Glycyl lysine isopeptide (Lys-Gly) (interchain with G-Cter in SUMO2) cross-links involve residues K1340 and K1341. The segment at Q1351 to D1385 is disordered. A compositionally biased stretch (basic residues) spans I1354–R1363. The span at R1364–R1375 shows a compositional bias: basic and acidic residues. Residue S1366 is modified to Phosphoserine. A Glycyl lysine isopeptide (Lys-Gly) (interchain with G-Cter in SUMO2) cross-link involves residue K1415. At S1489 the chain carries Phosphoserine. Residues F1579–T1604 form a disordered region. A phosphoserine mark is found at S1621, S1623, and S1663. G1963–S1970 provides a ligand contact to ATP. Residues K2070 to L2087 carry the Bipartite nuclear localization signal motif. A coiled-coil region spans residues R2105–R2136. T2474 bears the Phosphothreonine mark. Disordered regions lie at residues T2474–D2496, W2556–F2577, and L2597–L2677. A compositionally biased stretch (pro residues) spans P2560–G2573. The span at E2628–S2671 shows a compositional bias: basic and acidic residues. The necessary for nuclear localization stretch occupies residues K2661–L2677.

It belongs to the DNA2/NAM7 helicase family. As to quaternary structure, homodimer. Interacts with PER2; the interaction inhibits termination of circadian target genes. Interacts with CHD4, POLR2A, PRKDC and TRIM28. Interacts with UBE2I. Interacts (via N-terminus domain) with EXOSC9 (via C-terminus region); the interaction enhances SETX sumoylation. Interacts with NCL (via N-terminus domain). Interacts with PABPN1, PABPC1 and SF3B1. Interacts with SMN1/SMN2 and POLR2A; SMN1/SMN2 recruits SETX to POLR2A. Ubiquitinated. In terms of processing, sumoylated preferentially with SUMO2 or SUMO3. Highly expressed in skeletal muscle. Expressed in heart, fibroblast, placenta and liver. Weakly expressed in brain and lung. Expressed in the cortex of the kidney (highly expressed in tubular epithelial cells but low expression in the glomerulus).

It localises to the nucleus. Its subcellular location is the nucleoplasm. It is found in the nucleolus. The protein resides in the cytoplasm. The protein localises to the chromosome. It localises to the telomere. Its subcellular location is the cell projection. It is found in the axon. The protein resides in the growth cone. Its function is as follows. Probable RNA/DNA helicase involved in diverse aspects of RNA metabolism and genomic integrity. Plays a role in transcription regulation by its ability to modulate RNA Polymerase II (Pol II) binding to chromatin and through its interaction with proteins involved in transcription. Contributes to the mRNA splicing efficiency and splice site selection. Required for the resolution of R-loop RNA-DNA hybrid formation at G-rich pause sites located downstream of the poly(A) site, allowing XRN2 recruitment and XRN2-mediated degradation of the downstream cleaved RNA and hence efficient RNA polymerase II (RNAp II) transcription termination. Required for the 3' transcriptional termination of PER1 and CRY2, thus playing an important role in the circadian rhythm regulation. Involved in DNA double-strand breaks damage response generated by oxidative stress. In association with RRP45, targets the RNA exosome complex to sites of transcription-induced DNA damage. Plays a role in the development and maturation of germ cells: essential for male meiosis, acting at the interface of transcription and meiotic recombination, and in the process of gene silencing during meiotic sex chromosome inactivation (MSCI). May be involved in telomeric stability through the regulation of telomere repeat-containing RNA (TERRA) transcription. Plays a role in neurite outgrowth in hippocampal cells through FGF8-activated signaling pathways. Inhibits retinoic acid-induced apoptosis. This is Probable helicase senataxin from Homo sapiens (Human).